We begin with the raw amino-acid sequence, 563 residues long: MSETINTGAQFPTFEKPTVQFNEKGWGPCELPDTFKDVPYQPFSKNDRLGKICDWTSTSNNDKKYQNKYASTFGTGNQYAYYHEEDETTFHLVDTARVQKPPHQRGRFRNMRNSRSGRGRNARGGLNTHGHGMTTLNSKNVKARDTRRGVGKRFGHRGPPPKMRESSVAVRADWASIEEMDFPRLIKLSLPNIKEGEDIATCGTLEYYDKTYDRINVKNEKPLQKIDRIVHTVTTTDDPVIRRLSKTVGNVFATDAILATIMCSTRSNYSWDIVIEKVGEKIFMDKRDHTEFDLLTVNESSVEPPTDDDSSCNSPRNLAIEATFINHNFSQQVLKTGDQEAKYKFEETNPFISEDEDIQVASVGYRYKKWELGSDIVLVARCEHDGVLQTPSGEPQFLSIKALNEWDSKLANGVEWRQKLDTQRGAVLANELRNNACKLAKWTVQAVLAGSDQLKLGYVSRINPRDHSRHVILGTQQFKPHEFATQINLSMDNAWGILRCIIDLVMKQKDGKYLIMKDPNKPIIRLYDIPDNTFDSDDSDDGEGDDGEAFQQVYNYANNSNKI.

Positions 98–167 (VQKPPHQRGR…GPPPKMRESS (70 aa)) are disordered. The segment covering 100–121 (KPPHQRGRFRNMRNSRSGRGRN) has biased composition (basic residues). Thr-128 is modified (phosphothreonine). The interval 291–305 (EFDLLTVNESSVEPP) is RNA gate.

This sequence belongs to the eIF-3 subunit D family. Component of the eukaryotic translation initiation factor 3 (eIF-3) complex. The eIF-3 complex interacts with pix.

The protein resides in the cytoplasm. In terms of biological role, mRNA cap-binding component of the eukaryotic translation initiation factor 3 (eIF-3) complex, which is involved in protein synthesis of a specialized repertoire of mRNAs and, together with other initiation factors, stimulates binding of mRNA and methionyl-tRNAi to the 40S ribosome. The eIF-3 complex specifically targets and initiates translation of a subset of mRNAs involved in cell proliferation. In the eIF-3 complex, eif3d specifically recognizes and binds the 7-methylguanosine cap of a subset of mRNAs. This is Eukaryotic translation initiation factor 3 subunit D-1 from Drosophila grimshawi (Hawaiian fruit fly).